We begin with the raw amino-acid sequence, 826 residues long: Prominin-1-A (826 aa).

The next 3 helical transmembrane spans lie at 50 to 70 (YYEPGAIGILFNMMHAFLFVV), 106 to 126 (VVCAALGLLFTVLLPLVGLLF), and 153 to 173 (LLTTLLLTTTFIITAGVLCAY). N-linked (GlcNAc...) asparagine glycosylation is found at Asn-178, Asn-268, Asn-286, Asn-327, Asn-388, and Asn-404. A run of 2 helical transmembrane segments spans residues 439 to 459 (CMIVLILTFNFLGLLCGILGF) and 483 to 503 (VGFSFLFSWVLMGVITALFLA). N-linked (GlcNAc...) asparagine glycosylation is found at Asn-576, Asn-582, Asn-617, and Asn-693.

Belongs to the prominin family.

Its subcellular location is the apical cell membrane. The protein resides in the cell projection. It localises to the microvillus membrane. It is found in the endoplasmic reticulum. The protein localises to the endoplasmic reticulum-Golgi intermediate compartment. In terms of biological role, may play a role in cell differentiation, proliferation and apoptosis. Binds cholesterol in cholesterol-containing plasma membrane microdomains and may play a role in the organization of the apical plasma membrane in epithelial cells. Involved in regulation of MAPK and Akt signaling pathways. The polypeptide is Prominin-1-A (prom1a) (Danio rerio (Zebrafish)).